A 311-amino-acid polypeptide reads, in one-letter code: Homeobox-leucine zipper protein HOX1 (311 aa).

Disordered stretches follow at residues 29–69 (AGGA…SDHR) and 97–160 (AETT…KKLR). The segment covering 119 to 145 (SSPNSTLSSLSGKRGAPSAATAAAAAA) has biased composition (low complexity). The segment at residues 154 to 213 (GSRKKLRLSKDQAAVLEDTFKEHNTLNPKQKAALARQLNLKPRQVEVWFQNRRARTKLKQ) is a DNA-binding region (homeobox). Positions 212-256 (KQTEVDCELLKRCCETLTDENRRLHRELQELRALKLATAAAAPHH) are leucine-zipper. The interval 279-311 (SAATTTRNNSGAAPARPVPTRPWPPAAAQRSSA) is disordered. Residues 280–289 (AATTTRNNSG) show a composition bias toward polar residues. The span at 294–303 (RPVPTRPWPP) shows a compositional bias: pro residues.

This sequence belongs to the HD-ZIP homeobox family. Class II subfamily. As to quaternary structure, homodimer. May form a heterodimer with HOX2, HOX3 or HOX7. Expressed in root provascular and vascular cylinder, provascular and vascular strands of leaves, provascular and vascular strands of the whole panicle, in mature embryo provascular bundles of scutellum and embryonic axis and provascular and vascular strands of young immature spikelet organs. Expressed in differentiating and differentiated xylem and phloem elements, and in outer and inner bundle sheath cells of all vascular bundles. Expressed in auricles, ligules, culm, guard cells brac hairs and pollen.

The protein resides in the nucleus. Probable transcription repressor involved leaf development. Binds to the DNA sequence 5'-CAAT[GC]ATTG-3'. May act as a regulatory switch to specify provascular cell fate. This chain is Homeobox-leucine zipper protein HOX1 (HOX1), found in Oryza sativa subsp. indica (Rice).